A 330-amino-acid chain; its full sequence is Polyprenol dehydrogenase (330 aa).

Residues isoleucine 55, tyrosine 208, lysine 212, and threonine 245 each contribute to the NAD(+) site. Tyrosine 208 serves as the catalytic Proton acceptor.

The protein belongs to the short-chain dehydrogenases/reductases (SDR) family. In terms of tissue distribution, widely expressed. Highly expressed in the pancreas.

The protein resides in the lipid droplet. It is found in the secreted. It carries out the reaction a di-trans,poly-cis-polyprenol + NAD(+) = a di-trans,poly-cis-polyprenal + NADH + H(+). The catalysed reaction is a di-trans,poly-cis-polyprenol + NADP(+) = a di-trans,poly-cis-polyprenal + NADPH + H(+). The enzyme catalyses a di-trans,poly-cis-dolichol + NADP(+) = a di-trans,poly-cis-dolichal + NADPH + H(+). It catalyses the reaction a di-trans,poly-cis-dolichol + NAD(+) = a di-trans,poly-cis-dolichal + NADH + H(+). Its pathway is protein modification; protein glycosylation. Oxidoreductase that plays a key role in early steps of protein N-linked glycosylation by mediating two non-consecutive steps in dolichol biosynthesis. Acts both as a NAD(+)-dependent dehydrogenase and as a NADPH-dependent reductase during the conversion of polyprenol into dolichol. First catalyzes the NAD(+)-dependent dehydrogenation of polyprenol into polyprenal; polyprenal is then reduced into dolichal by SRD5A3. It then catalyzes the NADPH-dependent reduction of dolichal into dolichol. May also acts as a positive regulator of starvation-induced autophagy. This chain is Polyprenol dehydrogenase, found in Homo sapiens (Human).